A 409-amino-acid polypeptide reads, in one-letter code: Elongation factor Tu, plastid (409 aa).

The tr-type G domain occupies 10 to 214 (KPHINIGTIG…KIDSYIPTPI (205 aa)). The tract at residues 19-26 (GHVDHGKT) is G1. 19 to 26 (GHVDHGKT) serves as a coordination point for GTP. Threonine 26 is a binding site for Mg(2+). Positions 60 to 64 (GITIN) are G2. Positions 81–84 (DCPG) are G3. GTP contacts are provided by residues 81–85 (DCPGH) and 136–139 (NKED). A G4 region spans residues 136–139 (NKED). Positions 174–176 (SAL) are G5.

The protein belongs to the TRAFAC class translation factor GTPase superfamily. Classic translation factor GTPase family. EF-Tu/EF-1A subfamily.

It localises to the plastid. The catalysed reaction is GTP + H2O = GDP + phosphate + H(+). In terms of biological role, GTP hydrolase that promotes the GTP-dependent binding of aminoacyl-tRNA to the A-site of ribosomes during protein biosynthesis. The sequence is that of Elongation factor Tu, plastid (tufA) from Euglena longa (Euglenophycean alga).